The primary structure comprises 420 residues: Protein PEA2 (420 aa).

Residues 132–153 (LTKENNNSFPNSKRARSSTNMG) show a composition bias toward polar residues. The segment at 132-169 (LTKENNNSFPNSKRARSSTNMGGTDKFNKGAYHTDKAD) is disordered. Residues 157-169 (KFNKGAYHTDKAD) show a composition bias toward basic and acidic residues. Residue S230 is modified to Phosphoserine. The interval 323–363 (NSSRHNFGMSSPASSPVTWDPSSPSSVGSPTSGSGSRSLSI) is disordered. The segment covering 325 to 339 (SRHNFGMSSPASSPV) has biased composition (polar residues). A compositionally biased stretch (low complexity) spans 343–362 (PSSPSSVGSPTSGSGSRSLS).

In terms of biological role, localized to sites of polarized growth and is required for efficient mating and bipolar budding. The polypeptide is Protein PEA2 (PEA2) (Saccharomyces cerevisiae (strain ATCC 204508 / S288c) (Baker's yeast)).